The sequence spans 357 residues: Prostaglandin E2 receptor EP2 subtype (357 aa).

Residues 1-24 (MDNSFNDSRRVENCESRQYLLSDE) lie on the Extracellular side of the membrane. N-linked (GlcNAc...) asparagine glycosylation occurs at asparagine 6. Residues 25–48 (SPAISSVMFTAGVLGNLIALALLA) traverse the membrane as a helical segment. Residues 49–66 (RRWRGDTGCSAGSRTSIS) lie on the Cytoplasmic side of the membrane. A helical membrane pass occupies residues 67–92 (LFHVLVTELVLTDLLGTCLISPVVLA). Topologically, residues 93–112 (SYSRNQTLVALAPESRACTY) are extracellular. A disulfide bond links cysteine 110 and cysteine 188. A helical membrane pass occupies residues 113–133 (FAFTMTFFSLATMLMLFAMAL). The Cytoplasmic segment spans residues 134-152 (ERYLAIGHPYFYRRRVSRR). Residues 153-177 (GGLAVLPAIYGVSLLFCSLPLLNYG) traverse the membrane as a helical segment. At 178 to 199 (EYVQYCPGTWCFIQHGRTAYLQ) the chain is on the extracellular side. A helical transmembrane segment spans residues 200-224 (LYATVLLLLIVAVLGCNISVILNLI). The Cytoplasmic portion of the chain corresponds to 225–262 (RMQLRSKRSRCGLSGSSLRGPGSRRRGERTSMAEETDH). The span at 235 to 245 (CGLSGSSLRGP) shows a compositional bias: low complexity. A disordered region spans residues 235–255 (CGLSGSSLRGPGSRRRGERTS). The chain crosses the membrane as a helical span at residues 263–286 (LILLAIMTITFAVCSLPFTIFAYM). At 287–299 (DETSSRKEKWDLR) the chain is on the extracellular side. Residues 300 to 323 (ALRFLSVNSIIDPWVFVILRPPVL) traverse the membrane as a helical segment. Residues 324-357 (RLMRSVLCCRTSLRAPEAPGASCSTQQTDLCGQL) are Cytoplasmic-facing.

The protein belongs to the G-protein coupled receptor 1 family.

It localises to the cell membrane. Functionally, receptor for prostaglandin E2 (PGE2). The activity of this receptor is mediated by G(s) proteins that stimulate adenylate cyclase. The subsequent raise in intracellular cAMP is responsible for the relaxing effect of this receptor on smooth muscle. This is Prostaglandin E2 receptor EP2 subtype (Ptger2) from Rattus norvegicus (Rat).